We begin with the raw amino-acid sequence, 118 residues long: Iron-sulfur cluster assembly protein CyaY (118 aa).

It belongs to the frataxin family.

In terms of biological role, involved in iron-sulfur (Fe-S) cluster assembly. May act as a regulator of Fe-S biogenesis. The protein is Iron-sulfur cluster assembly protein CyaY of Buchnera aphidicola subsp. Baizongia pistaciae (strain Bp).